The sequence spans 459 residues: Asparagine--tRNA ligase (459 aa).

Belongs to the class-II aminoacyl-tRNA synthetase family. Homodimer.

It is found in the cytoplasm. The catalysed reaction is tRNA(Asn) + L-asparagine + ATP = L-asparaginyl-tRNA(Asn) + AMP + diphosphate + H(+). In Pelobacter propionicus (strain DSM 2379 / NBRC 103807 / OttBd1), this protein is Asparagine--tRNA ligase.